A 202-amino-acid chain; its full sequence is FMN-dependent NADH:quinone oxidoreductase 2 (202 aa).

Residues serine 9, 15–17 (SAS), 95–98 (MYNF), and 139–142 (TAGG) each bind FMN.

The protein belongs to the azoreductase type 1 family. Homodimer. Requires FMN as cofactor.

It catalyses the reaction 2 a quinone + NADH + H(+) = 2 a 1,4-benzosemiquinone + NAD(+). The catalysed reaction is N,N-dimethyl-1,4-phenylenediamine + anthranilate + 2 NAD(+) = 2-(4-dimethylaminophenyl)diazenylbenzoate + 2 NADH + 2 H(+). Quinone reductase that provides resistance to thiol-specific stress caused by electrophilic quinones. Reduces both benzoquinones and naphthoquinones efficiently. Its function is as follows. Also exhibits azoreductase activity. Catalyzes the reductive cleavage of the azo bond in aromatic azo compounds to the corresponding amines. Preferred substrates are the large bis-azo dye Ponceau BS, amaranth and tropaeolin O. This Pseudomonas aeruginosa (strain ATCC 15692 / DSM 22644 / CIP 104116 / JCM 14847 / LMG 12228 / 1C / PRS 101 / PAO1) protein is FMN-dependent NADH:quinone oxidoreductase 2.